Consider the following 346-residue polypeptide: Propane 2-monooxygenase, reductase component (346 aa).

Residues 5 to 94 (HKISFEPVDI…DCEIELLNFD (90 aa)) enclose the 2Fe-2S ferredoxin-type domain. [2Fe-2S] cluster contacts are provided by Cys-39, Cys-44, Cys-46, and Cys-78. Positions 104–205 (IQDVTTKVAA…NGPYGSCTLR (102 aa)) constitute an FAD-binding FR-type domain.

It belongs to the bacterial ring-hydroxylating dioxygenase ferredoxin reductase family. The propane 2-monooxygenase multicomponent enzyme system is composed of an electron transfer component and a monooxygenase component interacting with the effector protein PrmD. The electron transfer component is composed of a reductase (PrmB), and the monooxygenase component is formed by a large subunit (PrmA) and a small subunit (PrmC). The cofactor is FAD. It depends on [2Fe-2S] cluster as a cofactor.

Its function is as follows. Reductase component of the propane 2-monooxygenase multicomponent enzyme system which is involved in the degradation of propane via the O2-dependent hydroxylation of propane. Reductase catalyzes the transfer of electrons from NADH or NADPH to monooxygenase. The sequence is that of Propane 2-monooxygenase, reductase component from Gordonia sp. (strain TY-5).